Here is a 514-residue protein sequence, read N- to C-terminus: MKKLKINYLFIGILTLLLAAALWPSIPWFGKTENHIAAIQARGVLRVSTIDSPLTYSVINGKKYGLDYELAQQFANYLGVKLKVTVRQNISQLFDDLDNGNADLLAAGLVYDSARVKNYQPGPMYYSVSQQLVYRVGQYRPRSLATVNENQLTIAPGHVVVNDLQRLKETKFPDLSWKVDDKKGSTTLLEEVISGKLDYTIADSVAISLFQRVHPELAVALDVTDEQPVTWFSRLDDDNTLSAALLDFFNSINEDGSLARIEEKYLGHGDDFDYVDTRSFLRAVDNVLPELEPLFKKYAKEIDWRLLAAISYQESHWDPLATSPTGVRGLMMLTKNTAQSLGLTDRTDAEQSISGGARYLEDMMAKVPETVPEDERIWFALAAYNMGYAHMLDARSLTVKTKGNPDSWTDVKQRLPLLSQKPYYSKLTYGYARGHEAYAYVENIRKYQISLVGYLQEKEKQEAEAMKLAQDYPAVSPEELNKAPFPFLSFLSQSSGYLTHSPSLLFTPQKKEEK.

The signal sequence occupies residues 1–30; it reads MKKLKINYLFIGILTLLLAAALWPSIPWFG. The non-LT domain stretch occupies residues 31–269; that stretch reads KTENHIAAIQ…RIEEKYLGHG (239 aa). An LT domain region spans residues 270–514; the sequence is DDFDYVDTRS…LFTPQKKEEK (245 aa). Residue Glu314 is part of the active site.

This sequence in the N-terminal section; belongs to the bacterial solute-binding protein 3 family. In the C-terminal section; belongs to the transglycosylase Slt family.

The protein localises to the cell outer membrane. The enzyme catalyses Exolytic cleavage of the (1-&gt;4)-beta-glycosidic linkage between N-acetylmuramic acid (MurNAc) and N-acetylglucosamine (GlcNAc) residues in peptidoglycan, from either the reducing or the non-reducing ends of the peptidoglycan chains, with concomitant formation of a 1,6-anhydrobond in the MurNAc residue.. Its function is as follows. Murein-degrading enzyme that degrades murein glycan strands and insoluble, high-molecular weight murein sacculi, with the concomitant formation of a 1,6-anhydromuramoyl product. Lytic transglycosylases (LTs) play an integral role in the metabolism of the peptidoglycan (PG) sacculus. Their lytic action creates space within the PG sacculus to allow for its expansion as well as for the insertion of various structures such as secretion systems and flagella. The sequence is that of Membrane-bound lytic murein transglycosylase F from Salmonella typhimurium (strain LT2 / SGSC1412 / ATCC 700720).